Reading from the N-terminus, the 91-residue chain is Putative methyltransferase YfdM (91 aa).

The polypeptide is Putative methyltransferase YfdM (yfdM) (Escherichia coli (strain K12)).